The sequence spans 476 residues: Aspartyl/glutamyl-tRNA(Asn/Gln) amidotransferase subunit B (476 aa).

Belongs to the GatB/GatE family. GatB subfamily. Heterotrimer of A, B and C subunits.

It carries out the reaction L-glutamyl-tRNA(Gln) + L-glutamine + ATP + H2O = L-glutaminyl-tRNA(Gln) + L-glutamate + ADP + phosphate + H(+). The catalysed reaction is L-aspartyl-tRNA(Asn) + L-glutamine + ATP + H2O = L-asparaginyl-tRNA(Asn) + L-glutamate + ADP + phosphate + 2 H(+). Allows the formation of correctly charged Asn-tRNA(Asn) or Gln-tRNA(Gln) through the transamidation of misacylated Asp-tRNA(Asn) or Glu-tRNA(Gln) in organisms which lack either or both of asparaginyl-tRNA or glutaminyl-tRNA synthetases. The reaction takes place in the presence of glutamine and ATP through an activated phospho-Asp-tRNA(Asn) or phospho-Glu-tRNA(Gln). In Variovorax paradoxus (strain S110), this protein is Aspartyl/glutamyl-tRNA(Asn/Gln) amidotransferase subunit B.